A 620-amino-acid chain; its full sequence is Chaperone protein HtpG (620 aa).

An a; substrate-binding region spans residues 1–334; the sequence is MTTTDTAPQS…SEDLPLNLSR (334 aa). Positions 335-548 are b; sequence EMLQNNPQLA…GLGPDRALER (214 aa). The tract at residues 549-620 is c; sequence MLAQQNRGAA…RLNRLVLRAL (72 aa).

The protein belongs to the heat shock protein 90 family. Homodimer.

The protein resides in the cytoplasm. Molecular chaperone. Has ATPase activity. The sequence is that of Chaperone protein HtpG from Rhodopseudomonas palustris (strain BisB18).